The sequence spans 708 residues: uncharacterized protein (708 aa).

4 disordered regions span residues 1–79, 119–301, 349–390, and 410–461; these read MHAR…RRSS, AGEF…IHQR, YLSH…GDEN, and SNSF…KRQR. The segment covering 65–74 has biased composition (pro residues); the sequence is LPPPLPPPPV. Positions 238–249 are enriched in polar residues; that stretch reads DEAQSKTGSSSA. Low complexity predominate over residues 260–274; that stretch reads SKVSEGSSSLSAGSG. Over residues 410-419 the composition is skewed to polar residues; it reads SNSFPSSILR. A compositionally biased stretch (basic and acidic residues) spans 442-461; that stretch reads VGEKRPGEGSDLEEGSKRQR.

This is an uncharacterized protein from Arabidopsis thaliana (Mouse-ear cress).